The following is a 131-amino-acid chain: Small ribosomal subunit protein uS12 (131 aa).

Residues 1-32 are disordered; it reads MPTFSQLVRKGRTAPRYKTASPALQGSPQRRG. Position 89 is a 3-methylthioaspartic acid (D89). Residues 110–131 are disordered; it reads RKQGRSKYGAKRAKGGAAAGKK. The span at 111–131 shows a compositional bias: basic residues; the sequence is KQGRSKYGAKRAKGGAAAGKK.

Belongs to the universal ribosomal protein uS12 family. In terms of assembly, part of the 30S ribosomal subunit. Contacts proteins S8 and S17. May interact with IF1 in the 30S initiation complex.

In terms of biological role, with S4 and S5 plays an important role in translational accuracy. Its function is as follows. Interacts with and stabilizes bases of the 16S rRNA that are involved in tRNA selection in the A site and with the mRNA backbone. Located at the interface of the 30S and 50S subunits, it traverses the body of the 30S subunit contacting proteins on the other side and probably holding the rRNA structure together. The combined cluster of proteins S8, S12 and S17 appears to hold together the shoulder and platform of the 30S subunit. The polypeptide is Small ribosomal subunit protein uS12 (Acidobacterium capsulatum (strain ATCC 51196 / DSM 11244 / BCRC 80197 / JCM 7670 / NBRC 15755 / NCIMB 13165 / 161)).